A 202-amino-acid chain; its full sequence is MKRIVIIDYGLGNLRSVQKGLEHVGANPAISGNPEEILTADGIILPGVGAFIDAMKCLIPLKGVIAEFAESGKPMLGICLGQQVLMSSSEEGRLTGGLDLIQGRVLRFPKSELKVPHMGWNNIRIKQDHPLFKGISDGSFVYFVHSYYVDTTAENTLASCEYGLDFSASVVNSKGNVMGTQFHPEKSGTTGLKILKNFVEMC.

The region spanning 3 to 202 is the Glutamine amidotransferase type-1 domain; sequence RIVIIDYGLG…KILKNFVEMC (200 aa). The Nucleophile role is filled by Cys-79. Active-site residues include His-183 and Glu-185.

As to quaternary structure, heterodimer of HisH and HisF.

It localises to the cytoplasm. The catalysed reaction is 5-[(5-phospho-1-deoxy-D-ribulos-1-ylimino)methylamino]-1-(5-phospho-beta-D-ribosyl)imidazole-4-carboxamide + L-glutamine = D-erythro-1-(imidazol-4-yl)glycerol 3-phosphate + 5-amino-1-(5-phospho-beta-D-ribosyl)imidazole-4-carboxamide + L-glutamate + H(+). It catalyses the reaction L-glutamine + H2O = L-glutamate + NH4(+). It functions in the pathway amino-acid biosynthesis; L-histidine biosynthesis; L-histidine from 5-phospho-alpha-D-ribose 1-diphosphate: step 5/9. Its function is as follows. IGPS catalyzes the conversion of PRFAR and glutamine to IGP, AICAR and glutamate. The HisH subunit catalyzes the hydrolysis of glutamine to glutamate and ammonia as part of the synthesis of IGP and AICAR. The resulting ammonia molecule is channeled to the active site of HisF. The chain is Imidazole glycerol phosphate synthase subunit HisH from Methanosarcina acetivorans (strain ATCC 35395 / DSM 2834 / JCM 12185 / C2A).